Here is a 143-residue protein sequence, read N- to C-terminus: Turripeptide VIII-01 (143 aa).

A signal peptide spans 1 to 23 (MALSLDILMSVTMVTAVLTTVNA). Positions 24 to 32 (EYKDSRLDS) are excised as a propeptide.

Post-translationally, contains 4 disulfide bonds. Expressed by the venom duct.

The protein resides in the secreted. The polypeptide is Turripeptide VIII-01 (Gemmula speciosa (Splendid gem-turris)).